We begin with the raw amino-acid sequence, 177 residues long: Large ribosomal subunit protein uL16 (177 aa).

This sequence belongs to the universal ribosomal protein uL16 family. Part of the 50S ribosomal subunit. Weakly binds 5S rRNA. Probably binds the A and P site tRNAs.

In terms of biological role, this is 1 of 5 proteins that mediate the attachment of the 5S rRNA onto the large ribosomal subunit, stabilizing the orientation of adjacent RNA domains. Modeling places the A and P site tRNAs in close proximity to this protein. This is Large ribosomal subunit protein uL16 from Haloarcula marismortui (strain ATCC 43049 / DSM 3752 / JCM 8966 / VKM B-1809) (Halobacterium marismortui).